Reading from the N-terminus, the 207-residue chain is Ribosomal RNA small subunit methyltransferase G (207 aa).

S-adenosyl-L-methionine is bound by residues Gly74, Leu79, 125-126, and Arg140; that span reads VE.

It belongs to the methyltransferase superfamily. RNA methyltransferase RsmG family.

Its subcellular location is the cytoplasm. It catalyses the reaction guanosine(527) in 16S rRNA + S-adenosyl-L-methionine = N(7)-methylguanosine(527) in 16S rRNA + S-adenosyl-L-homocysteine. Its function is as follows. Specifically methylates the N7 position of guanine in position 527 of 16S rRNA. The sequence is that of Ribosomal RNA small subunit methyltransferase G from Shewanella halifaxensis (strain HAW-EB4).